The chain runs to 305 residues: MATRHFLTLLDLTPEELSHLIQRAITIKNRLKAQGPTYTPFSNRTLAMFFEKSSTRTRVSFETAMAHFGGHALFLSPRDTQLGRGEPIGDTARVLAEMVDIVMIRTFSHAGLEEYAAASAVPVINALTDDYHPCQLLADVMTWTECRGSVKGKTAVWIGDGNNMCHSWINAARQFDFRLRVCCPPGYEPDADIVAAAGERVEILHDPRQAVQGADLVTTDVWASMGQEEEQARRERDFAGFQVTEKLLDHAADNVLFLHCLPAHRGEEISTTLLDDPRAAVWQEAGNRLHAQKALIEFLLLGKVE.

Carbamoyl phosphate contacts are provided by residues 54 to 57 (STRT), Gln81, Arg105, and 132 to 135 (HPCQ). L-ornithine contacts are provided by residues Asn163, Asp220, and 224-225 (SM). Carbamoyl phosphate contacts are provided by residues 260 to 261 (CL) and Arg288.

This sequence belongs to the aspartate/ornithine carbamoyltransferase superfamily. OTCase family.

It localises to the cytoplasm. It catalyses the reaction carbamoyl phosphate + L-ornithine = L-citrulline + phosphate + H(+). Its pathway is amino-acid biosynthesis; L-arginine biosynthesis; L-arginine from L-ornithine and carbamoyl phosphate: step 1/3. Its function is as follows. Reversibly catalyzes the transfer of the carbamoyl group from carbamoyl phosphate (CP) to the N(epsilon) atom of ornithine (ORN) to produce L-citrulline. The sequence is that of Ornithine carbamoyltransferase from Chromohalobacter salexigens (strain ATCC BAA-138 / DSM 3043 / CIP 106854 / NCIMB 13768 / 1H11).